Here is an 875-residue protein sequence, read N- to C-terminus: Alanine--tRNA ligase (875 aa).

Residues H564, H568, C666, and H670 each coordinate Zn(2+).

It belongs to the class-II aminoacyl-tRNA synthetase family. As to quaternary structure, homotetramer. Requires Zn(2+) as cofactor.

It is found in the cytoplasm. It catalyses the reaction tRNA(Ala) + L-alanine + ATP = L-alanyl-tRNA(Ala) + AMP + diphosphate. In terms of biological role, catalyzes the attachment of alanine to tRNA(Ala) in a two-step reaction: alanine is first activated by ATP to form Ala-AMP and then transferred to the acceptor end of tRNA(Ala). Also edits incorrectly charged Ser-tRNA(Ala) and Gly-tRNA(Ala) via its editing domain. The polypeptide is Alanine--tRNA ligase (Klebsiella pneumoniae subsp. pneumoniae (strain ATCC 700721 / MGH 78578)).